Reading from the N-terminus, the 111-residue chain is Wound-induced proteinase inhibitor 1 (111 aa).

The first 23 residues, 1–23 (MESKFAHIIVFFLLATSFETLMA), serve as a signal peptide directing secretion. The propeptide occupies 24–36 (RKEIDGPEVIELL).

The protein belongs to the protease inhibitor I13 (potato type I serine protease inhibitor) family.

The protein resides in the secreted. This is Wound-induced proteinase inhibitor 1 (PIIF) from Solanum lycopersicum (Tomato).